The sequence spans 337 residues: Putative NAC domain-containing protein 94 (337 aa).

An NAC domain is found at 20 to 191 (VLPGFRFHPT…AWAICRIFKK (172 aa)).

It localises to the nucleus. This Arabidopsis thaliana (Mouse-ear cress) protein is Putative NAC domain-containing protein 94 (ANAC094).